The primary structure comprises 452 residues: Phosphoglucosamine mutase (452 aa).

The active-site Phosphoserine intermediate is the Ser109. Residues Ser109, Asp248, Asp250, and Asp252 each contribute to the Mg(2+) site. Ser109 is modified (phosphoserine).

This sequence belongs to the phosphohexose mutase family. Mg(2+) serves as cofactor. In terms of processing, activated by phosphorylation.

The enzyme catalyses alpha-D-glucosamine 1-phosphate = D-glucosamine 6-phosphate. Functionally, catalyzes the conversion of glucosamine-6-phosphate to glucosamine-1-phosphate. The polypeptide is Phosphoglucosamine mutase (Erythrobacter litoralis (strain HTCC2594)).